The chain runs to 22 residues: leu leader peptide (22 aa).

The tract at residues 1-22 (MLHHMTSRANLLLLRRGGSQRS) is disordered. Positions 11 to 22 (LLLLRRGGSQRS) are enriched in low complexity.

In terms of biological role, involved in control of the biosynthesis of leucine. The polypeptide is leu leader peptide (leuL) (Corynebacterium glutamicum (strain ATCC 13032 / DSM 20300 / JCM 1318 / BCRC 11384 / CCUG 27702 / LMG 3730 / NBRC 12168 / NCIMB 10025 / NRRL B-2784 / 534)).